We begin with the raw amino-acid sequence, 638 residues long: 1-deoxy-D-xylulose-5-phosphate synthase (638 aa).

Residues H74 and 115–117 (GHS) contribute to the thiamine diphosphate site. Mg(2+) is bound at residue D146. Residues 147–148 (GA), N175, Y286, and E366 each bind thiamine diphosphate. Residue N175 coordinates Mg(2+).

It belongs to the transketolase family. DXPS subfamily. As to quaternary structure, homodimer. Mg(2+) is required as a cofactor. It depends on thiamine diphosphate as a cofactor.

The enzyme catalyses D-glyceraldehyde 3-phosphate + pyruvate + H(+) = 1-deoxy-D-xylulose 5-phosphate + CO2. The protein operates within metabolic intermediate biosynthesis; 1-deoxy-D-xylulose 5-phosphate biosynthesis; 1-deoxy-D-xylulose 5-phosphate from D-glyceraldehyde 3-phosphate and pyruvate: step 1/1. Its function is as follows. Catalyzes the acyloin condensation reaction between C atoms 2 and 3 of pyruvate and glyceraldehyde 3-phosphate to yield 1-deoxy-D-xylulose-5-phosphate (DXP). This chain is 1-deoxy-D-xylulose-5-phosphate synthase, found in Syntrophomonas wolfei subsp. wolfei (strain DSM 2245B / Goettingen).